Here is a 401-residue protein sequence, read N- to C-terminus: Probable tRNA sulfurtransferase (401 aa).

The THUMP domain maps to 60-165; that stretch reads EAVMARLKHV…EDATYLTFRD (106 aa). ATP-binding positions include 183–184, 208–209, Arg-265, Gly-287, and Gln-296; these read MI and HF.

The protein belongs to the ThiI family.

Its subcellular location is the cytoplasm. The catalysed reaction is [ThiI sulfur-carrier protein]-S-sulfanyl-L-cysteine + a uridine in tRNA + 2 reduced [2Fe-2S]-[ferredoxin] + ATP + H(+) = [ThiI sulfur-carrier protein]-L-cysteine + a 4-thiouridine in tRNA + 2 oxidized [2Fe-2S]-[ferredoxin] + AMP + diphosphate. It carries out the reaction [ThiS sulfur-carrier protein]-C-terminal Gly-Gly-AMP + S-sulfanyl-L-cysteinyl-[cysteine desulfurase] + AH2 = [ThiS sulfur-carrier protein]-C-terminal-Gly-aminoethanethioate + L-cysteinyl-[cysteine desulfurase] + A + AMP + 2 H(+). Its pathway is cofactor biosynthesis; thiamine diphosphate biosynthesis. Functionally, catalyzes the ATP-dependent transfer of a sulfur to tRNA to produce 4-thiouridine in position 8 of tRNAs, which functions as a near-UV photosensor. Also catalyzes the transfer of sulfur to the sulfur carrier protein ThiS, forming ThiS-thiocarboxylate. This is a step in the synthesis of thiazole, in the thiamine biosynthesis pathway. The sulfur is donated as persulfide by IscS. The protein is Probable tRNA sulfurtransferase of Bacillus licheniformis (strain ATCC 14580 / DSM 13 / JCM 2505 / CCUG 7422 / NBRC 12200 / NCIMB 9375 / NCTC 10341 / NRRL NRS-1264 / Gibson 46).